We begin with the raw amino-acid sequence, 405 residues long: Prostaglandin E2 receptor EP1 subtype (405 aa).

The Extracellular portion of the chain corresponds to 1 to 39 (MSPYGLNLSLVDEATTCVTPRVPNTSVVLPTGGNGTSPA). N7, N24, and N34 each carry an N-linked (GlcNAc...) asparagine glycan. Residues 40–62 (LPIFSMTLGAVSNVLALALLAQV) form a helical membrane-spanning segment. At 63–80 (AGRLRRRRSTATFLLFVA) the chain is on the cytoplasmic side. A helical membrane pass occupies residues 81–99 (SLLAIDLAGHVIPGALVLR). Over 100–113 (LYTAGRAPAGGACH) the chain is Extracellular. Residues C112 and C190 are joined by a disulfide bond. The helical transmembrane segment at 114 to 135 (FLGGCMVFFGLCPLLLGCGMAV) threads the bilayer. The Cytoplasmic segment spans residues 136–157 (ERCVGVTQPLIHAARVSVARAR). The helical transmembrane segment at 158 to 179 (LALALLAAMALAVALLPLVHVG) threads the bilayer. Topologically, residues 180-202 (HYELQYPGTWCFISLGPPGGWRQ) are extracellular. Residues 203–228 (ALLAGLFAGLGLAALLAALVCNTLSG) form a helical membrane-spanning segment. The Cytoplasmic portion of the chain corresponds to 229-301 (LALLRARWRR…HAHDVEMVGQ (73 aa)). Residues 302–323 (LVGIMVVSCICWSPLLVLVVLA) form a helical membrane-spanning segment. The Extracellular portion of the chain corresponds to 324 to 337 (IGGWNSNSLQRPLF). A helical transmembrane segment spans residues 338–357 (LAVRLASWNQILDPWVYILL). At 358 to 405 (RQAMLRQLLRLLPLRVSAKGGPTELSLTKSAWEASSLRSSRHSGFSHL) the chain is on the cytoplasmic side.

It belongs to the G-protein coupled receptor 1 family. Phosphorylated. In terms of tissue distribution, highly abundant in kidney and lung. Found in a lesser extent in spleen, colon, and thymus. Also expressed in uterine myometrium and endometrium.

Its subcellular location is the cell membrane. In terms of biological role, receptor for prostaglandin E2 (PGE2). The activity of this receptor is mediated by G(q) proteins which activate a phosphatidylinositol-calcium second messenger system. May play a role as an important modulator of renal function. Implicated the smooth muscle contractile response to PGE2 in various tissues. Isoform 1 and isoform 2 have identical ligand binding properties, but isoform 2 lacks coupling to calcium mobilization and may therefore attenuate the action of PGE2 on tissues. This Rattus norvegicus (Rat) protein is Prostaglandin E2 receptor EP1 subtype (Ptger1).